Consider the following 254-residue polypeptide: 3-dehydroquinate dehydratase (254 aa).

Residues 47–49 (EFR) and R83 contribute to the 3-dehydroquinate site. H144 acts as the Proton donor/acceptor in catalysis. Residue K171 is the Schiff-base intermediate with substrate of the active site. 3 residues coordinate 3-dehydroquinate: R213, S232, and Q236.

This sequence belongs to the type-I 3-dehydroquinase family. As to quaternary structure, homodimer.

It carries out the reaction 3-dehydroquinate = 3-dehydroshikimate + H2O. It functions in the pathway metabolic intermediate biosynthesis; chorismate biosynthesis; chorismate from D-erythrose 4-phosphate and phosphoenolpyruvate: step 3/7. Functionally, involved in the third step of the chorismate pathway, which leads to the biosynthesis of aromatic amino acids. Catalyzes the cis-dehydration of 3-dehydroquinate (DHQ) and introduces the first double bond of the aromatic ring to yield 3-dehydroshikimate. The chain is 3-dehydroquinate dehydratase from Neisseria meningitidis serogroup A / serotype 4A (strain DSM 15465 / Z2491).